Consider the following 377-residue polypeptide: Queuine tRNA-ribosyltransferase (377 aa).

Asp89 acts as the Proton acceptor in catalysis. Substrate-binding positions include 89 to 93 (DSGGF), Asp143, Gln187, and Gly214. Residues 245–251 (GVGKPED) are RNA binding. The active-site Nucleophile is Asp264. Residues 269 to 273 (TRNAR) form an RNA binding; important for wobble base 34 recognition region. Zn(2+)-binding residues include Cys302, Cys304, Cys307, and His333.

This sequence belongs to the queuine tRNA-ribosyltransferase family. Homodimer. Within each dimer, one monomer is responsible for RNA recognition and catalysis, while the other monomer binds to the replacement base PreQ1. The cofactor is Zn(2+).

The enzyme catalyses 7-aminomethyl-7-carbaguanine + guanosine(34) in tRNA = 7-aminomethyl-7-carbaguanosine(34) in tRNA + guanine. Its pathway is tRNA modification; tRNA-queuosine biosynthesis. Catalyzes the base-exchange of a guanine (G) residue with the queuine precursor 7-aminomethyl-7-deazaguanine (PreQ1) at position 34 (anticodon wobble position) in tRNAs with GU(N) anticodons (tRNA-Asp, -Asn, -His and -Tyr). Catalysis occurs through a double-displacement mechanism. The nucleophile active site attacks the C1' of nucleotide 34 to detach the guanine base from the RNA, forming a covalent enzyme-RNA intermediate. The proton acceptor active site deprotonates the incoming PreQ1, allowing a nucleophilic attack on the C1' of the ribose to form the product. After dissociation, two additional enzymatic reactions on the tRNA convert PreQ1 to queuine (Q), resulting in the hypermodified nucleoside queuosine (7-(((4,5-cis-dihydroxy-2-cyclopenten-1-yl)amino)methyl)-7-deazaguanosine). The chain is Queuine tRNA-ribosyltransferase from Shewanella denitrificans (strain OS217 / ATCC BAA-1090 / DSM 15013).